Consider the following 225-residue polypeptide: MAKDMTLLWGSGSPPCWRVMIVLEEKNLQAYNSKLLSFEKGEHKSAEVMSMNPRGQLPSFKHGSKVLNESYAACMYLESQFKSQGNKLIPDCPAEQAMMYQRMFEGLTLAQKMADVIYYSWKVPEAERHDSAVKRNKENLSTELKLWEEYLQKTSGSFVAGKSFSLADVSVFPGVAYLFRFGLTEERYPQLTAYYNSLKERPSIKASWPPTWLESPQGQDMLKDV.

The region spanning 3–85 (KDMTLLWGSG…YLESQFKSQG (83 aa)) is the GST N-terminal domain. Arg18 lines the glutathione pocket. Positions 92 to 217 (CPAEQAMMYQ…WPPTWLESPQ (126 aa)) constitute a GST C-terminal domain.

This sequence belongs to the GST superfamily. Theta family. As to quaternary structure, homodimer. As to expression, found in all the tissues examined. Highest values found in liver and in intestinal mucosa.

The protein localises to the cytoplasm. It catalyses the reaction RX + glutathione = an S-substituted glutathione + a halide anion + H(+). In terms of biological role, conjugation of reduced glutathione to a wide number of exogenous and endogenous hydrophobic electrophiles. This is Glutathione S-transferase A from Pleuronectes platessa (European plaice).